A 99-amino-acid polypeptide reads, in one-letter code: Aspartyl/glutamyl-tRNA(Asn/Gln) amidotransferase subunit C (99 aa).

The protein belongs to the GatC family. Heterotrimer of A, B and C subunits.

It catalyses the reaction L-glutamyl-tRNA(Gln) + L-glutamine + ATP + H2O = L-glutaminyl-tRNA(Gln) + L-glutamate + ADP + phosphate + H(+). The catalysed reaction is L-aspartyl-tRNA(Asn) + L-glutamine + ATP + H2O = L-asparaginyl-tRNA(Asn) + L-glutamate + ADP + phosphate + 2 H(+). Allows the formation of correctly charged Asn-tRNA(Asn) or Gln-tRNA(Gln) through the transamidation of misacylated Asp-tRNA(Asn) or Glu-tRNA(Gln) in organisms which lack either or both of asparaginyl-tRNA or glutaminyl-tRNA synthetases. The reaction takes place in the presence of glutamine and ATP through an activated phospho-Asp-tRNA(Asn) or phospho-Glu-tRNA(Gln). The sequence is that of Aspartyl/glutamyl-tRNA(Asn/Gln) amidotransferase subunit C from Leptothrix cholodnii (strain ATCC 51168 / LMG 8142 / SP-6) (Leptothrix discophora (strain SP-6)).